Here is a 628-residue protein sequence, read N- to C-terminus: Phomenoic acid biosynthesis cluster MFS-type transporter (628 aa).

14 helical membrane passes run 102–122, 150–170, 174–194, 204–224, 232–252, 262–282, 302–322, 329–349, 375–395, 407–427, 435–455, 488–508, 524–544, and 595–615; these read IHGF…FLYA, VGFV…YGIL, WLYI…GAAP, VFAG…LSIN, AYLS…PVIG, WAFY…FFLL, FVGA…INFG, NSGT…AFAV, MLLF…IYFI, ALDS…TILV, FGYY…ANVF, GFEA…YAVI, IMIA…AVFI, and AKAF…SLGF.

Belongs to the major facilitator superfamily. TCR/Tet family.

It localises to the cell membrane. MFS-type transporter; part of the gene cluster that mediates the biosynthesis of phomenoic acid, a long chain aliphatic carboxylic acid that does not appear to be essential for pathogenicity but may play a role in allowing to outcompete other fungi in the environmental niche via its antifungal properties. Is probably involved in the efflux of phomenoic acid. This Leptosphaeria maculans (strain JN3 / isolate v23.1.3 / race Av1-4-5-6-7-8) (Blackleg fungus) protein is Phomenoic acid biosynthesis cluster MFS-type transporter.